The primary structure comprises 205 residues: Protein N-terminal glutamine amidohydrolase (205 aa).

Catalysis depends on residues cysteine 20, histidine 74, and aspartate 90.

The protein belongs to the NTAQ1 family. In terms of assembly, monomer.

It carries out the reaction N-terminal L-glutaminyl-[protein] + H2O = N-terminal L-glutamyl-[protein] + NH4(+). Its function is as follows. Mediates the side-chain deamidation of N-terminal glutamine residues to glutamate, an important step in N-end rule pathway of protein degradation. Conversion of the resulting N-terminal glutamine to glutamate renders the protein susceptible to arginylation, polyubiquitination and degradation as specified by the N-end rule. Does not act on substrates with internal or C-terminal glutamine and does not act on non-glutamine residues in any position. The protein is Protein N-terminal glutamine amidohydrolase (tun) of Drosophila virilis (Fruit fly).